A 119-amino-acid chain; its full sequence is UPF0292 protein TV1259 (119 aa).

The Toprim domain occupies 11–93; the sequence is SIPIIVEGRN…YVDLYLWNFI (83 aa). 3 residues coordinate Mg(2+): Glu-17, Asp-62, and Asp-64.

It belongs to the UPF0292 family. Mg(2+) is required as a cofactor.

In Thermoplasma volcanium (strain ATCC 51530 / DSM 4299 / JCM 9571 / NBRC 15438 / GSS1), this protein is UPF0292 protein TV1259.